A 200-amino-acid chain; its full sequence is Superoxide dismutase [Mn] 1 (200 aa).

The Mn(2+) site is built by His29, His76, Asp158, and His162.

Belongs to the iron/manganese superoxide dismutase family. Mn(2+) is required as a cofactor.

It carries out the reaction 2 superoxide + 2 H(+) = H2O2 + O2. Functionally, destroys superoxide anion radicals which are normally produced within the cells and which are toxic to biological systems. This Haloferax volcanii (strain ATCC 29605 / DSM 3757 / JCM 8879 / NBRC 14742 / NCIMB 2012 / VKM B-1768 / DS2) (Halobacterium volcanii) protein is Superoxide dismutase [Mn] 1 (sod1).